A 224-amino-acid chain; its full sequence is ATP-dependent dethiobiotin synthetase BioD (224 aa).

An ATP-binding site is contributed by 12 to 17 (EVGKTV). Thr-16 lines the Mg(2+) pocket. Lys-34 is a catalytic residue. Substrate is bound at residue Thr-38. Residues Asp-47, 106–109 (EGAG), 166–167 (GS), and 196–198 (PEG) each bind ATP. Positions 47 and 106 each coordinate Mg(2+).

This sequence belongs to the dethiobiotin synthetase family. In terms of assembly, homodimer. The cofactor is Mg(2+).

The protein localises to the cytoplasm. The enzyme catalyses (7R,8S)-7,8-diammoniononanoate + CO2 + ATP = (4R,5S)-dethiobiotin + ADP + phosphate + 3 H(+). Its pathway is cofactor biosynthesis; biotin biosynthesis; biotin from 7,8-diaminononanoate: step 1/2. Functionally, catalyzes a mechanistically unusual reaction, the ATP-dependent insertion of CO2 between the N7 and N8 nitrogen atoms of 7,8-diaminopelargonic acid (DAPA, also called 7,8-diammoniononanoate) to form a ureido ring. In Saccharopolyspora erythraea (strain ATCC 11635 / DSM 40517 / JCM 4748 / NBRC 13426 / NCIMB 8594 / NRRL 2338), this protein is ATP-dependent dethiobiotin synthetase BioD.